The primary structure comprises 154 residues: Large ribosomal subunit protein uL13 (154 aa).

Belongs to the universal ribosomal protein uL13 family. As to quaternary structure, part of the 50S ribosomal subunit.

Its function is as follows. This protein is one of the early assembly proteins of the 50S ribosomal subunit, although it is not seen to bind rRNA by itself. It is important during the early stages of 50S assembly. The chain is Large ribosomal subunit protein uL13 from Rhodospirillum rubrum (strain ATCC 11170 / ATH 1.1.1 / DSM 467 / LMG 4362 / NCIMB 8255 / S1).